The sequence spans 258 residues: Imidazole glycerol phosphate synthase subunit HisF (258 aa).

Catalysis depends on residues D12 and D131.

This sequence belongs to the HisA/HisF family. As to quaternary structure, heterodimer of HisH and HisF.

It localises to the cytoplasm. The catalysed reaction is 5-[(5-phospho-1-deoxy-D-ribulos-1-ylimino)methylamino]-1-(5-phospho-beta-D-ribosyl)imidazole-4-carboxamide + L-glutamine = D-erythro-1-(imidazol-4-yl)glycerol 3-phosphate + 5-amino-1-(5-phospho-beta-D-ribosyl)imidazole-4-carboxamide + L-glutamate + H(+). It functions in the pathway amino-acid biosynthesis; L-histidine biosynthesis; L-histidine from 5-phospho-alpha-D-ribose 1-diphosphate: step 5/9. IGPS catalyzes the conversion of PRFAR and glutamine to IGP, AICAR and glutamate. The HisF subunit catalyzes the cyclization activity that produces IGP and AICAR from PRFAR using the ammonia provided by the HisH subunit. The sequence is that of Imidazole glycerol phosphate synthase subunit HisF from Sinorhizobium medicae (strain WSM419) (Ensifer medicae).